We begin with the raw amino-acid sequence, 117 residues long: Ribosome-binding factor A (117 aa).

Belongs to the RbfA family. In terms of assembly, monomer. Binds 30S ribosomal subunits, but not 50S ribosomal subunits or 70S ribosomes.

It is found in the cytoplasm. One of several proteins that assist in the late maturation steps of the functional core of the 30S ribosomal subunit. Associates with free 30S ribosomal subunits (but not with 30S subunits that are part of 70S ribosomes or polysomes). Required for efficient processing of 16S rRNA. May interact with the 5'-terminal helix region of 16S rRNA. The sequence is that of Ribosome-binding factor A from Lacticaseibacillus casei (strain BL23) (Lactobacillus casei).